We begin with the raw amino-acid sequence, 369 residues long: Beta-1,3-galactosyltransferase 9 (369 aa).

Residues 1–12 (MQVTFCRLRTHQ) lie on the Cytoplasmic side of the membrane. The helical; Signal-anchor for type II membrane protein transmembrane segment at 13-33 (WCFILFNVILFHALLFGTDFV) threads the bilayer. Residues 34-369 (EEYFLHSLPY…IKNNLMYFAD (336 aa)) lie on the Lumenal side of the membrane. N-linked (GlcNAc...) asparagine glycans are attached at residues asparagine 66, asparagine 96, and asparagine 109.

Belongs to the glycosyltransferase 31 family.

It localises to the golgi apparatus membrane. Putative glycosyltransferase that could catalyze the transfer of galactose residues from UDP-alpha-D-galactose. The sequence is that of Beta-1,3-galactosyltransferase 9 from Homo sapiens (Human).